Consider the following 1075-residue polypeptide: MAAEKLRDLSQPIDVGVLDATVAAFFVTGSKEERAAADQILRDLQANPDMWLQVVHILQNTNSLDTKFFALQVLEGVIKYRWNALPVEQRDGMKNYISEVIVQLSSNEASFRSERLYVNKLNVILVQIVKHDWPAKWTSFIPDLVAAAKTSETICENCMAILKLLSEEVFDFSRGEMTQQKIKELKQSLNSEFKLIHELCLYVLSASQRQDLIRATLSALHAYLSWIPLGYIFESTLLETLLKFFPVPAYRNLTIQCLTEVAALNFGDFYNVQYVKMYTIFIGQLRIILPPSTKIPEAYSSGSGEEQAFIQNLALFFTSFFKFHIRVLESTPEVVSLLLAGLEYLINISYVDDTEVFKVCLDYWNSLVLELFDAHHNSDNPAVSASLMGLQPFLPGMVDGLGSQVMQRRQLYSHPMSKLRGLMINRMAKPEEVLIVEDENGNIVRETMKDNDVLVQYKIMRETLIYLSHLDHDDTEKQMLRKLNKQLSGEEWAWNNLNTLCWAIGSISGSMAEDQENRFLVMVIRDLLNLCEITKGKDNKAVIASNIMYVVGQYPRFLRAHWKFLKTVVNKLFEFMHETHPGVQDMACDTFLKIVQKCKRKFVIVQVGENEPFVSELLTGLATTVQDLEPHQIHSFYESVGNMIQAESDPQKRDEYLQRLMALPNQKWAEIIGQARHSVEFLKDQVVIRTVLNILQTNTSAATSLGTYFLSQISLIFLDMLNVYRMYSELVSTNITEGGPYASKTSFVKLLRSVKRETLKLIETFLDKAEDQPHIGKQFVPPMMESVLGDYARNVPDARESEVLSLFATIINKYKATMLDDVPHIFEAVFQCTLEMITKNFEDYPEHRLKFFSLLRAIATFCFPALIKLSSPQLKLVMDSIIWAFRHTERNIAETGLNLLLEMLKNFQQSEFCNQFYRSYFMQIEQEIFAVLTDTFHKPGFKLHVLVLQQLFCLPESGALTEPLWDATTVPYPYPDNVAFVREYTIKLLSSSFPNMTAAEVTQFVNGLYESRNDPSGFKNNIRDFLVQSKEFSAQDNKDLYAEEAAAQRERERQRMLSIPGLIAPNEIQDEMVDS.

The Importin N-terminal domain maps to 37 to 103 (ADQILRDLQA…KNYISEVIVQ (67 aa)). HEAT repeat units lie at residues 91–130 (DGMK…QIVK), 135–171 (AKWT…EVFD), 232–267 (IFES…LNFG), 336–373 (SLLL…ELFD), 388–425 (MGLQ…LMIN), 474–513 (DTEK…SMAE), 563–600 (KFLK…KCKR), 612–649 (PFVS…AESD), 682–719 (LKDQ…IFLD), 756–793 (RETL…DYAR), 798–835 (ARES…CTLE), and 894–934 (ETGL…VLTD).

The protein belongs to the exportin family. As to quaternary structure, interacts with RAN1. Expressed ubiquitously, with higher levels in stems, inflorescences and roots. Present in mature pollen grains, unpollinated pistils, and 2-week-old seedlings.

The protein resides in the nucleus. The protein localises to the nuclear pore complex. It is found in the nucleus membrane. Receptor for the leucine-rich nuclear export signal (NES). Binds cooperatively to the NES on its target protein and to the small GTPase Ran in its active GTP-bound form. Required for the maternal-to-embryonic transition and during gametophyte development. Involved in heat-induced oxidative stress basal resistance. The polypeptide is Protein EXPORTIN 1A (Arabidopsis thaliana (Mouse-ear cress)).